Here is a 732-residue protein sequence, read N- to C-terminus: Catalase-peroxidase (732 aa).

The tryptophyl-tyrosyl-methioninium (Trp-Tyr) (with M-246) cross-link spans 97–220 (WHSAGTYRTS…LAAVQMGLIY (124 aa)). The Proton acceptor role is filled by His-98. Residues 220–246 (YVNPEGPDGNPDPVAAGRDIRETFARM) constitute a cross-link (tryptophyl-tyrosyl-methioninium (Tyr-Met) (with W-97)). His-261 is a binding site for heme b.

This sequence belongs to the peroxidase family. Peroxidase/catalase subfamily. As to quaternary structure, homodimer or homotetramer. Heme b is required as a cofactor. Post-translationally, formation of the three residue Trp-Tyr-Met cross-link is important for the catalase, but not the peroxidase activity of the enzyme.

It catalyses the reaction H2O2 + AH2 = A + 2 H2O. The enzyme catalyses 2 H2O2 = O2 + 2 H2O. In terms of biological role, bifunctional enzyme with both catalase and broad-spectrum peroxidase activity. In Chlorobium phaeobacteroides (strain DSM 266 / SMG 266 / 2430), this protein is Catalase-peroxidase.